The chain runs to 49 residues: MSRVYIYPLTVFYFFAIEMSVFCYYNWFYRRNFPYLFRPIFPFLIVLIS.

A helical transmembrane segment spans residues Ile-6–Phe-28.

It is found in the membrane. This is an uncharacterized protein from Saccharomyces cerevisiae (strain ATCC 204508 / S288c) (Baker's yeast).